A 94-amino-acid chain; its full sequence is Large ribosomal subunit protein bL27 (94 aa).

A propeptide spanning residues 1-9 (MLKLNLQFF) is cleaved from the precursor.

It belongs to the bacterial ribosomal protein bL27 family. The N-terminus is cleaved by ribosomal processing cysteine protease Prp.

In Staphylococcus aureus (strain Mu3 / ATCC 700698), this protein is Large ribosomal subunit protein bL27.